The chain runs to 2303 residues: Genome polyprotein (2303 aa).

A zinc finger spans residues 3 to 14 (CKHGYPDVCPIC). The tract at residues 30–46 (DGEWFPTDLLCVDLDDD) is acidic. Positions 60-73 (MEWTDVPLVCDTVM) are theilo. The tract at residues 73–93 (MEPQGNASSSDKSNSQSSGNE) is disordered. A lipid anchor (N-myristoyl glycine; by host) is attached at G77. The span at 80 to 90 (SSSDKSNSQSS) shows a compositional bias: low complexity. A disulfide bridge connects residues C501 and C503. The host EIF4E binding stretch occupies residues 1041-1047 (YYKQRLI). Residues 1283–1448 (IPLASLCEKF…CKTPAGMLDI (166 aa)) form the SF3 helicase domain. ATP is bound at residue 1312-1319 (GAAGQGKS). Residue Y1608 is modified to O-(5'-phospho-RNA)-tyrosine. The region spanning 1636-1829 (NPVMDFELFC…AATIITRELI (194 aa)) is the Peptidase C3 domain. Catalysis depends on for protease 3C activity residues H1680, D1714, and C1793. The RdRp catalytic domain maps to 2071 to 2189 (NYVYDVDYSN…GTNYQIDFNL (119 aa)). Residues D2077 and D2175 each act as for RdRp activity in the active site.

The protein belongs to the picornaviruses polyprotein family. In terms of assembly, interacts with host EIF4E. Interacts with the leader protein. As to quaternary structure, interacts with host RAN; the complex L-RAN recruits cellular kinases responsible for the L-induced nucleocytoplasmic trafficking inhibition. The complex L-RAN can further bind to the host exportins XPO1/CRM1 and CSE1L/CAS. Interacts with the protein 2A. Interacts with host RNASEL; this interaction prevents RNASEL activation by its substrate 2'-5' oligoadenylates. Phosphorylated. Post-translationally, specific enzymatic cleavages by the viral protease in vivo yield a variety of precursors and mature proteins. The polyprotein seems to be cotranslationally cleaved at the 2A/2B junction by a ribosomal skip from one codon to the next without formation of a peptide bond. This process would release the P1-2A peptide from the translational complex. In terms of processing, during virion maturation, immature virions are rendered infectious following cleavage of VP0 into VP4 and VP2. This maturation seems to be an autocatalytic event triggered by the presence of RNA in the capsid and is followed by a conformational change of the particle. Uridylylated by the polymerase and is covalently linked to the 5'-end of genomic RNA. This uridylylated form acts as a nucleotide-peptide primer for the polymerase. Post-translationally, myristoylation is required during RNA encapsidation and formation of the mature virus particle.

It is found in the virion. It localises to the host cytoplasm. The protein localises to the host nucleus. Its subcellular location is the host nucleolus. The protein resides in the host cytoplasmic vesicle membrane. The enzyme catalyses RNA(n) + a ribonucleoside 5'-triphosphate = RNA(n+1) + diphosphate. The catalysed reaction is ATP + H2O = ADP + phosphate + H(+). It catalyses the reaction Selective cleavage of Gln-|-Gly bond in the poliovirus polyprotein. In other picornavirus reactions Glu may be substituted for Gln, and Ser or Thr for Gly.. In terms of biological role, forms a complex with host RAN and probably binds to exportins carrying activated MAPK in order to mediate the hyperphosphorylation of host Phe/Gly containing nuclear pore proteins (Nups) resulting in cessation of active nucleocytoplasmic transport. Proteins with NLS signals fail to import, cellular mRNAs fail to export, and some proteins small enough for diffusion are not retained anymore (efflux). The resulting inhibition of cellular protein synthesis serves to ensure maximal viral gene expression and to evade host immune response. The leader protein also inhibits host interferon regulatory factor 3 (IRF3) dimerization, thereby blocking the transcriptional activation of IFN genes. Binds to host RNase L thereby preventing its activation by 2'-5' oligoadenylates in order to counteract the antiviral interferon-inducible OAS/RNase L pathway. Inhibits the integrated stress response (ISR) in the infected cell. Inhibits the host EIF2AK2/PKR by rendering this kinase unable to detect double-stranded RNA. Also impairs host stress granule formation probably by acting on a step downstream of EIF2AK2/PKR activation. Its function is as follows. Forms an icosahedral capsid of pseudo T=3 symmetry with capsid proteins VP2 and VP3. Together they form an icosahedral capsid composed of 60 copies of each VP1, VP2, and VP3, with a diameter of approximately 300 Angstroms. VP4 lies on the inner surface of the protein shell formed by VP1, VP2 and VP3. All the three latter proteins contain a beta-sheet structure called beta-barrel jelly roll. VP1 is situated at the 12 fivefold axes, whereas VP2 and VP3 are located at the quasi-sixfold axes. Lies on the inner surface of the capsid shell. After binding to the host receptor, the capsid undergoes conformational changes. Capsid protein VP4 is released, capsid protein VP1 N-terminus is externalized, and together, they shape a pore in the host membrane through which the viral genome is translocated into the host cell cytoplasm. After genome has been released, the channel shrinks. Functionally, VP0 precursor is a component of immature procapsids. In terms of biological role, involved in host translation shutoff by inhibiting cap-dependent mRNA translation. Nuclear localization is required for this function. The resulting inhibition of cellular protein synthesis serves to ensure maximal viral gene expression and to evade host immune response. Inhibits the phosphorylation of the leader protein. Binds to the RNA stem-loop essential for the ribosomal frameshift event and trans-activates the production of protein 2B*. Its function is as follows. Affects membrane integrity and causes an increase in membrane permeability. Associates with and induces structural rearrangements of intracellular membranes. It displays RNA-binding, nucleotide binding and NTPase activities. Functionally, serves as membrane anchor via its hydrophobic domain. In terms of biological role, forms a primer, VPg-pU, which is utilized by the polymerase for the initiation of RNA chains. Its function is as follows. Cysteine protease that generates mature viral proteins from the precursor polyprotein. In addition to its proteolytic activity, it binds to viral RNA, and thus influences viral genome replication. RNA and substrate cooperatively bind to the protease. Cleaves host PABP1, this cleavage is important for viral replication. Replicates the genomic and antigenomic RNAs by recognizing replications specific signals. Performs VPg uridylylation. The chain is Genome polyprotein from Mus musculus (Mouse).